Here is a 365-residue protein sequence, read N- to C-terminus: tRNA/tmRNA (uracil-C(5))-methyltransferase (365 aa).

Residues Gln189, Tyr217, Asn222, Glu238, and Asp298 each coordinate S-adenosyl-L-methionine. Cys323 functions as the Nucleophile in the catalytic mechanism. Glu357 functions as the Proton acceptor in the catalytic mechanism.

It belongs to the class I-like SAM-binding methyltransferase superfamily. RNA M5U methyltransferase family. TrmA subfamily.

The catalysed reaction is uridine(54) in tRNA + S-adenosyl-L-methionine = 5-methyluridine(54) in tRNA + S-adenosyl-L-homocysteine + H(+). The enzyme catalyses uridine(341) in tmRNA + S-adenosyl-L-methionine = 5-methyluridine(341) in tmRNA + S-adenosyl-L-homocysteine + H(+). Its function is as follows. Dual-specificity methyltransferase that catalyzes the formation of 5-methyluridine at position 54 (m5U54) in all tRNAs, and that of position 341 (m5U341) in tmRNA (transfer-mRNA). In Shewanella amazonensis (strain ATCC BAA-1098 / SB2B), this protein is tRNA/tmRNA (uracil-C(5))-methyltransferase.